Reading from the N-terminus, the 251-residue chain is 5'-nucleotidase SurE (251 aa).

Residues Asp-9, Asp-10, Ser-40, and Asn-94 each coordinate a divalent metal cation.

This sequence belongs to the SurE nucleotidase family. The cofactor is a divalent metal cation.

The protein localises to the cytoplasm. The catalysed reaction is a ribonucleoside 5'-phosphate + H2O = a ribonucleoside + phosphate. Its function is as follows. Nucleotidase that shows phosphatase activity on nucleoside 5'-monophosphates. This chain is 5'-nucleotidase SurE, found in Aquifex aeolicus (strain VF5).